A 290-amino-acid polypeptide reads, in one-letter code: 4-hydroxy-tetrahydrodipicolinate synthase (290 aa).

Thr44 provides a ligand contact to pyruvate. Catalysis depends on Tyr132, which acts as the Proton donor/acceptor. Lys160 (schiff-base intermediate with substrate) is an active-site residue. Pyruvate is bound at residue Ile202.

It belongs to the DapA family. Homotetramer; dimer of dimers.

It localises to the cytoplasm. It catalyses the reaction L-aspartate 4-semialdehyde + pyruvate = (2S,4S)-4-hydroxy-2,3,4,5-tetrahydrodipicolinate + H2O + H(+). It functions in the pathway amino-acid biosynthesis; L-lysine biosynthesis via DAP pathway; (S)-tetrahydrodipicolinate from L-aspartate: step 3/4. Catalyzes the condensation of (S)-aspartate-beta-semialdehyde [(S)-ASA] and pyruvate to 4-hydroxy-tetrahydrodipicolinate (HTPA). The protein is 4-hydroxy-tetrahydrodipicolinate synthase of Geobacter sulfurreducens (strain ATCC 51573 / DSM 12127 / PCA).